The primary structure comprises 874 residues: Alanine--tRNA ligase (874 aa).

Zn(2+)-binding residues include His564, His568, Cys665, and His669.

It belongs to the class-II aminoacyl-tRNA synthetase family. Zn(2+) is required as a cofactor.

It is found in the cytoplasm. It carries out the reaction tRNA(Ala) + L-alanine + ATP = L-alanyl-tRNA(Ala) + AMP + diphosphate. Catalyzes the attachment of alanine to tRNA(Ala) in a two-step reaction: alanine is first activated by ATP to form Ala-AMP and then transferred to the acceptor end of tRNA(Ala). Also edits incorrectly charged Ser-tRNA(Ala) and Gly-tRNA(Ala) via its editing domain. The sequence is that of Alanine--tRNA ligase from Polaromonas naphthalenivorans (strain CJ2).